The chain runs to 442 residues: tRNA modification GTPase MnmE (442 aa).

The (6S)-5-formyl-5,6,7,8-tetrahydrofolate site is built by Arg24, Glu82, and Lys120. A TrmE-type G domain is found at 217 to 367 (GLHIVITGEP…LISLIKEKAE (151 aa)). Residues 227–232 (NVGKST), 246–252 (SEYAGTT), and 271–274 (DTAG) contribute to the GTP site. Mg(2+) contacts are provided by Ser231 and Thr252. A (6S)-5-formyl-5,6,7,8-tetrahydrofolate-binding site is contributed by Lys442.

The protein belongs to the TRAFAC class TrmE-Era-EngA-EngB-Septin-like GTPase superfamily. TrmE GTPase family. As to quaternary structure, homodimer. Heterotetramer of two MnmE and two MnmG subunits. K(+) is required as a cofactor.

It localises to the cytoplasm. In terms of biological role, exhibits a very high intrinsic GTPase hydrolysis rate. Involved in the addition of a carboxymethylaminomethyl (cmnm) group at the wobble position (U34) of certain tRNAs, forming tRNA-cmnm(5)s(2)U34. This Wolbachia sp. subsp. Drosophila simulans (strain wRi) protein is tRNA modification GTPase MnmE.